We begin with the raw amino-acid sequence, 631 residues long: MSSNSKAKPTTRENAAEPFKRALSGCIRSIAGDAEVEVAFANERPGMTGERIRLPELSKRPTLQELAVTRGLGDSMALRKACTHARIQRTMSPQGADARAIFDAVEQARVEAIGSLRMAGVAKNLNVMLEEKYAKANFATIERQADAPLGEAVALLVREKLTGQKPPASAGKVLDLWREFIEGKAAGDIEHLSSTINNQQAFARVVRDMLTSMEVAEKYGDDDNEPDEQESETDEDQPRSQEQDENASDEEAGDDAAPADENQAAEEQMEEGEMDGAEISDDDLQDEGDEDSETPGEVKRPNQPFADFNEKVDYAVFTREFDETIASEELCDEAELDRLRAFLDKQLAHLQGAVGRLANRLQRRLMAQQNRSWEFDLEEGYLDSARLQRIIIDPMQPLSFKREKDTNFRDTVVTLLIDNSGSMRGRPITVAATCADILARTLERCGVKVEILGFTTKAWKGGQSREKWLAGGKPQAPGRLNDLRHIVYKSADAPWRRARRNLGLMMREGLLKENIDGEALIWAHERLMARREQRRILMMISDGAPVDDSTLSVNPGNYLERHLRAVIEQIETRSPVELLAIGIGHDVTRYYRRAVTIVDADELAGAMTEQLAALFEDESQRRGSSRLRRAG.

Residues 218 to 306 form a disordered region; the sequence is KYGDDDNEPD…EVKRPNQPFA (89 aa). Composition is skewed to acidic residues over residues 222–235 and 243–294; these read DDNE…ETDE and QDEN…DSET. The 220-residue stretch at 412–631 folds into the VWFA domain; sequence VVTLLIDNSG…RGSSRLRRAG (220 aa).

Heterotrimer of CobN, CobS and CobT.

Its subcellular location is the cytoplasm. It carries out the reaction hydrogenobyrinate a,c-diamide + Co(2+) + ATP + H2O = cob(II)yrinate a,c diamide + ADP + phosphate + 5 H(+). It functions in the pathway cofactor biosynthesis; adenosylcobalamin biosynthesis; cob(II)yrinate a,c-diamide from precorrin-2 (aerobic route): step 10/10. Functionally, catalyzes cobalt insertion in the corrin ring. This is Aerobic cobaltochelatase subunit CobT (cobT) from Sinorhizobium sp.